Here is a 509-residue protein sequence, read N- to C-terminus: tRNA-2-methylthio-N(6)-dimethylallyladenosine synthase (509 aa).

The segment covering 1-13 has biased composition (polar residues); sequence MNEQQRLASQQAN. Positions 1–26 are disordered; that stretch reads MNEQQRLASQQANSSKKKEEKDYSKY. The segment covering 16 to 25 has biased composition (basic and acidic residues); sequence KKKEEKDYSK. Positions 66 to 184 constitute an MTTase N-terminal domain; sequence RKFYIRTYGC…LPYILKDAMF (119 aa). [4Fe-4S] cluster is bound by residues C75, C111, C145, C221, C225, and C228. The Radical SAM core domain maps to 207 to 437; it reads RRGDIKAWVN…NALVNKLAIE (231 aa). Residues 440–503 enclose the TRAM domain; that stretch reads NRYKGQIVEV…TWSLNGELVE (64 aa).

It belongs to the methylthiotransferase family. MiaB subfamily. Monomer. [4Fe-4S] cluster is required as a cofactor.

Its subcellular location is the cytoplasm. The catalysed reaction is N(6)-dimethylallyladenosine(37) in tRNA + (sulfur carrier)-SH + AH2 + 2 S-adenosyl-L-methionine = 2-methylsulfanyl-N(6)-dimethylallyladenosine(37) in tRNA + (sulfur carrier)-H + 5'-deoxyadenosine + L-methionine + A + S-adenosyl-L-homocysteine + 2 H(+). In terms of biological role, catalyzes the methylthiolation of N6-(dimethylallyl)adenosine (i(6)A), leading to the formation of 2-methylthio-N6-(dimethylallyl)adenosine (ms(2)i(6)A) at position 37 in tRNAs that read codons beginning with uridine. This is tRNA-2-methylthio-N(6)-dimethylallyladenosine synthase from Bacillus cereus (strain ATCC 10987 / NRS 248).